A 757-amino-acid chain; its full sequence is RNA-directed RNA polymerase catalytic subunit (757 aa).

The tract at residues Ser50 to Tyr82 is disordered. Residues Trp55–Pro64 are compositionally biased toward polar residues. 2 consecutive short sequence motifs (nuclear localization signal) follow at residues Arg187–Met195 and Arg203–Ser216. Residues Arg249–Glu256 are promoter-binding site. The RdRp catalytic domain occupies Val286–Tyr483.

The protein belongs to the influenza viruses polymerase PB1 family. Influenza RNA polymerase is composed of three subunits: PB1, PB2 and PA. Interacts (via N-terminus) with PA (via C-terminus). Interacts (via C-terminus) with PB2 (via N-terminus); this interaction is essential for transcription initiation. Post-translationally, phosphorylated by host PRKCA.

Its subcellular location is the host nucleus. The protein localises to the host cytoplasm. The enzyme catalyses RNA(n) + a ribonucleoside 5'-triphosphate = RNA(n+1) + diphosphate. In terms of biological role, RNA-dependent RNA polymerase which is responsible for replication and transcription of virus RNA segments. The transcription of viral mRNAs occurs by a unique mechanism called cap-snatching. 5' methylated caps of cellular mRNAs are cleaved after 10-13 nucleotides by PA. In turn, these short capped RNAs are used as primers by PB1 for transcription of viral mRNAs. During virus replication, PB1 initiates RNA synthesis and copy vRNA into complementary RNA (cRNA) which in turn serves as a template for the production of more vRNAs. This Influenza A virus (strain A/Turkey/Minnesota/833/1980 H4N2) protein is RNA-directed RNA polymerase catalytic subunit.